We begin with the raw amino-acid sequence, 253 residues long: Sec-independent protein translocase protein TatC (253 aa).

A run of 6 helical transmembrane segments spans residues 18 to 38, 69 to 89, 96 to 116, 151 to 171, 187 to 207, and 208 to 228; these read VSVG…KSIF, AIVI…APGL, VILP…AFSY, LILG…LAKV, IVVI…SQIF, and MALP…MVNP. A disordered region spans residues 231–253; sequence KDNENNNENNNENNTKENTKSES. Positions 244-253 are enriched in basic and acidic residues; that stretch reads NTKENTKSES.

It belongs to the TatC family. The Tat system comprises two distinct complexes: a TatABC complex, containing multiple copies of TatA, TatB and TatC subunits, and a separate TatA complex, containing only TatA subunits. Substrates initially bind to the TatABC complex, which probably triggers association of the separate TatA complex to form the active translocon.

The protein localises to the cell inner membrane. Its function is as follows. Part of the twin-arginine translocation (Tat) system that transports large folded proteins containing a characteristic twin-arginine motif in their signal peptide across membranes. Together with TatB, TatC is part of a receptor directly interacting with Tat signal peptides. The polypeptide is Sec-independent protein translocase protein TatC (Helicobacter pylori (strain ATCC 700392 / 26695) (Campylobacter pylori)).